Reading from the N-terminus, the 250-residue chain is Ribosomal RNA small subunit methyltransferase G (250 aa).

Residues G78, L83, 129-130 (AE), and R144 contribute to the S-adenosyl-L-methionine site. The interval 224–250 (IAAPRKRGGQQRRAGHARGTSNRRRGT) is disordered. The span at 227 to 250 (PRKRGGQQRRAGHARGTSNRRRGT) shows a compositional bias: basic residues.

This sequence belongs to the methyltransferase superfamily. RNA methyltransferase RsmG family.

The protein localises to the cytoplasm. In terms of biological role, specifically methylates the N7 position of guanine in position 518 of 16S rRNA. This chain is Ribosomal RNA small subunit methyltransferase G, found in Nocardioides sp. (strain ATCC BAA-499 / JS614).